The following is a 535-amino-acid chain: Interferon lambda receptor 1 (535 aa).

An N-terminal signal peptide occupies residues 1–20; that stretch reads MWRADRWAPLLLFLLQSALG. The Extracellular portion of the chain corresponds to 21-227; it reads RPRLAPPRNV…FLEAPGDKRA (207 aa). Residues 26–121 enclose the Fibronectin type-III domain; sequence PPRNVTLFSQ…ESRYLEYLFD (96 aa). N-linked (GlcNAc...) asparagine glycosylation is found at asparagine 29, asparagine 36, and asparagine 52. Intrachain disulfides connect cysteine 73/cysteine 81, cysteine 85/cysteine 149, and cysteine 194/cysteine 216. Asparagine 141 carries N-linked (GlcNAc...) asparagine glycosylation. A helical transmembrane segment spans residues 228 to 248; it reads VLAMPSLLLLLIAAVAAGVAW. At 249–535 the chain is on the cytoplasmic side; that stretch reads KIMKGNPWFQ…GRMLGDYLVR (287 aa). Disordered stretches follow at residues 301-419 and 478-520; these read NRPA…APCG and VNNP…SSVQ. The segment covering 321–336 has biased composition (acidic residues); the sequence is STEDEDEDTDYDDDGD. Positions 350–360 are enriched in basic and acidic residues; that stretch reads EKPRVMEHSET. Positions 376–396 are enriched in low complexity; it reads GSDGSSAWDSSDRSWSSTGDS. Basic and acidic residues predominate over residues 397-414; it reads SYKDEVGSSSCLDRKEPD. The span at 482–503 shows a compositional bias: acidic residues; that stretch reads EGEEEQEDEEEEEEEEEEEDWE.

Belongs to the type II cytokine receptor family. Heterodimer with IL10RB. Post-translationally, ubiquitinated by FBXO45-containing E3 ligase leading to proteasomal degradation.

The protein localises to the membrane. Functionally, the IFNLR1/IL10RB dimer is a receptor for the cytokine ligands IFNL2 and IFNL3 and mediates their antiviral activity. The ligand/receptor complex stimulate the activation of the JAK/STAT signaling pathway leading to the expression of IFN-stimulated genes (ISG), which contribute to the antiviral state. Determines the cell type specificity of the lambda interferon action. Shows a more restricted pattern of expression in the epithelial tissues thereby limiting responses to lambda interferons primarily to epithelial cells of the respiratory, gastrointestinal, and reproductive tracts. Seems not to be essential for early virus-activated host defense in vaginal infection, but plays an important role in Toll-like receptor (TLR)-induced antiviral defense. Plays a significant role in the antiviral immune defense in the intestinal epithelium. In Mus musculus (Mouse), this protein is Interferon lambda receptor 1 (Ifnlr1).